Consider the following 304-residue polypeptide: Thymidylate synthase (304 aa).

DUMP is bound by residues Arg-30 and 157-158 (RR). Cys-177 (nucleophile) is an active-site residue. Residues 206–209 (RSCD), Asn-217, and 247–249 (HVY) contribute to the dUMP site. (6R)-5,10-methylene-5,6,7,8-tetrahydrofolate is bound at residue Asp-209.

This sequence belongs to the thymidylate synthase family. Homodimer.

The protein localises to the nucleus. The catalysed reaction is dUMP + (6R)-5,10-methylene-5,6,7,8-tetrahydrofolate = 7,8-dihydrofolate + dTMP. Its pathway is pyrimidine metabolism; dTTP biosynthesis. With respect to regulation, inhibited by 5-fluoro-2'-deoxyuridine 5'-monophosphate (FdUMP). Thymidylate synthase required for de novo biosynthesis of pyrimidine deoxyribonucleotides. Required for both nuclear and mitochondrial DNA synthesis. The protein is Thymidylate synthase (CDC21) of Saccharomyces cerevisiae (strain ATCC 204508 / S288c) (Baker's yeast).